We begin with the raw amino-acid sequence, 203 residues long: Putative zinc finger protein 876 (203 aa).

C2H2-type zinc fingers lie at residues 63 to 85 (YTCEECGKAFYRSSHLTEHKNIH), 91 to 113 (YKCEECGNAFYRSSHLTKHKRIH), 119 to 141 (YKCEECGKAFRQSSALNEHKKIH), and 147 to 169 (YKCKECGKAFRWSRSLNEHTNIH). A C2H2-type 5; degenerate zinc finger spans residues 175–197 (YTCEECGKDFTWSSTLTVHQRIQ).

This sequence belongs to the krueppel C2H2-type zinc-finger protein family.

The protein localises to the nucleus. In terms of biological role, may be involved in transcriptional regulation. The polypeptide is Putative zinc finger protein 876 (ZNF876P) (Homo sapiens (Human)).